Consider the following 225-residue polypeptide: Uracil-DNA glycosylase 1 (225 aa).

Aspartate 68 (proton acceptor) is an active-site residue.

Belongs to the uracil-DNA glycosylase (UDG) superfamily. UNG family.

Its subcellular location is the cytoplasm. The enzyme catalyses Hydrolyzes single-stranded DNA or mismatched double-stranded DNA and polynucleotides, releasing free uracil.. In terms of biological role, excises uracil residues from the DNA which can arise as a result of misincorporation of dUMP residues by DNA polymerase or due to deamination of cytosine. The sequence is that of Uracil-DNA glycosylase 1 (ung1) from Streptomyces coelicolor (strain ATCC BAA-471 / A3(2) / M145).